Consider the following 201-residue polypeptide: Holliday junction branch migration complex subunit RuvA (201 aa).

The domain I stretch occupies residues methionine 1–glutamine 63. Residues asparagine 64–glutamine 142 form a domain II region. The flexible linker stretch occupies residues lysine 143–valine 149. Residues asparagine 150–lysine 201 are domain III.

Belongs to the RuvA family. As to quaternary structure, homotetramer. Forms an RuvA(8)-RuvB(12)-Holliday junction (HJ) complex. HJ DNA is sandwiched between 2 RuvA tetramers; dsDNA enters through RuvA and exits via RuvB. An RuvB hexamer assembles on each DNA strand where it exits the tetramer. Each RuvB hexamer is contacted by two RuvA subunits (via domain III) on 2 adjacent RuvB subunits; this complex drives branch migration. In the full resolvosome a probable DNA-RuvA(4)-RuvB(12)-RuvC(2) complex forms which resolves the HJ.

The protein localises to the cytoplasm. In terms of biological role, the RuvA-RuvB-RuvC complex processes Holliday junction (HJ) DNA during genetic recombination and DNA repair, while the RuvA-RuvB complex plays an important role in the rescue of blocked DNA replication forks via replication fork reversal (RFR). RuvA specifically binds to HJ cruciform DNA, conferring on it an open structure. The RuvB hexamer acts as an ATP-dependent pump, pulling dsDNA into and through the RuvAB complex. HJ branch migration allows RuvC to scan DNA until it finds its consensus sequence, where it cleaves and resolves the cruciform DNA. In Oceanobacillus iheyensis (strain DSM 14371 / CIP 107618 / JCM 11309 / KCTC 3954 / HTE831), this protein is Holliday junction branch migration complex subunit RuvA.